Here is a 192-residue protein sequence, read N- to C-terminus: Putative metal-sulfur cluster biosynthesis proteins YuaD (192 aa).

The region spanning 15–179 is the MOSC domain; that stretch reads ADTKSFVTKQ…VYTGDEIEVH (165 aa).

The chain is Putative metal-sulfur cluster biosynthesis proteins YuaD (yuaD) from Bacillus subtilis (strain 168).